A 379-amino-acid chain; its full sequence is Succinyl-diaminopimelate desuccinylase (379 aa).

Zn(2+) is bound at residue His70. Residue Asp72 is part of the active site. Asp103 serves as a coordination point for Zn(2+). Glu137 acts as the Proton acceptor in catalysis. The Zn(2+) site is built by Glu138, Glu166, and His352.

This sequence belongs to the peptidase M20A family. DapE subfamily. As to quaternary structure, homodimer. Zn(2+) serves as cofactor. The cofactor is Co(2+).

It carries out the reaction N-succinyl-(2S,6S)-2,6-diaminopimelate + H2O = (2S,6S)-2,6-diaminopimelate + succinate. It participates in amino-acid biosynthesis; L-lysine biosynthesis via DAP pathway; LL-2,6-diaminopimelate from (S)-tetrahydrodipicolinate (succinylase route): step 3/3. Catalyzes the hydrolysis of N-succinyl-L,L-diaminopimelic acid (SDAP), forming succinate and LL-2,6-diaminopimelate (DAP), an intermediate involved in the bacterial biosynthesis of lysine and meso-diaminopimelic acid, an essential component of bacterial cell walls. The chain is Succinyl-diaminopimelate desuccinylase from Burkholderia orbicola (strain MC0-3).